The primary structure comprises 304 residues: NADH-cytochrome b5 reductase 2 (304 aa).

Residues Met9–Gly29 traverse the membrane as a helical segment. One can recognise an FAD-binding FR-type domain in the interval Asn43–Lys155. FAD contacts are provided by residues Asp135–Gly150 and Val174–Leu209.

It belongs to the flavoprotein pyridine nucleotide cytochrome reductase family. FAD is required as a cofactor.

The protein resides in the membrane. It catalyses the reaction 2 Fe(III)-[cytochrome b5] + NADH = 2 Fe(II)-[cytochrome b5] + NAD(+) + H(+). In terms of biological role, NADH-cytochrome b5 reductases are involved in desaturation and elongation of fatty acids, cholesterol biosynthesis and drug metabolism. This is NADH-cytochrome b5 reductase 2 (cyb5r2) from Xenopus tropicalis (Western clawed frog).